The sequence spans 519 residues: Cytochrome P450 monooxygenase FPY7 (519 aa).

The helical transmembrane segment at 12–34 threads the bilayer; sequence SLSLRWKIIVTLLAIYTLRIIGT. A heme-binding site is contributed by Cys465.

The protein belongs to the cytochrome P450 family. Requires heme as cofactor.

Its subcellular location is the membrane. The protein operates within secondary metabolite biosynthesis. Functionally, cytochrome P450 monooxygenase; part of the gene cluster that mediates the biosynthesis of the gamma-pyrones fusapyrone (FPY) and deoxyfusapyrone (dFPY). FPY is an undecaketide and thus likely synthesized by the polyketide synthase FPY1 from acetyl-CoA functioning as starter unit and the addition of 10 malonyl-CoA extender units by successive Claisen-condensations. Next to this, FPY shares some rare features: C-glycosylated 4-deoxyglucose at C-3, a gem-dimethyl group at C-13, and an alpha-beta to beta-gamma double bond shift at C-20. During FPY biosynthesis mono-C-methyl groups are transferred to the tetra-, penta-, hexa- and heptaketide, while two C-methyl groups are transferred to the nonaketide, suggesting that the CMet domain is programmed to selectively catalyze two successive C-alpha-methylation reactions of the nonaketide, while other alpha-carbons are non- or mono-methylated only. While the origin of the 4'-deoxyglucose moiety remains opaque, its transfer to C-3 is most likely mediated by the C-glycosyltransferase FPY2. Next to this, the hydroxyl group present at C-33 and discriminating between FPY and dFPY, is likely to be installed by the cytochrome P450 monooxygenase FPY7. No putative function can be predicted for the remaining genes FPY3-FPY6. The sequence is that of Cytochrome P450 monooxygenase FPY7 from Fusarium mangiferae (Mango malformation disease fungus).